Here is a 252-residue protein sequence, read N- to C-terminus: Imidazole glycerol phosphate synthase subunit HisF (252 aa).

Catalysis depends on residues D11 and D130.

It belongs to the HisA/HisF family. In terms of assembly, heterodimer of HisH and HisF.

Its subcellular location is the cytoplasm. It carries out the reaction 5-[(5-phospho-1-deoxy-D-ribulos-1-ylimino)methylamino]-1-(5-phospho-beta-D-ribosyl)imidazole-4-carboxamide + L-glutamine = D-erythro-1-(imidazol-4-yl)glycerol 3-phosphate + 5-amino-1-(5-phospho-beta-D-ribosyl)imidazole-4-carboxamide + L-glutamate + H(+). The protein operates within amino-acid biosynthesis; L-histidine biosynthesis; L-histidine from 5-phospho-alpha-D-ribose 1-diphosphate: step 5/9. Functionally, IGPS catalyzes the conversion of PRFAR and glutamine to IGP, AICAR and glutamate. The HisF subunit catalyzes the cyclization activity that produces IGP and AICAR from PRFAR using the ammonia provided by the HisH subunit. This is Imidazole glycerol phosphate synthase subunit HisF from Thermococcus gammatolerans (strain DSM 15229 / JCM 11827 / EJ3).